The sequence spans 186 residues: Ribosome-recycling factor (186 aa).

This sequence belongs to the RRF family.

It localises to the cytoplasm. In terms of biological role, responsible for the release of ribosomes from messenger RNA at the termination of protein biosynthesis. May increase the efficiency of translation by recycling ribosomes from one round of translation to another. In Pediococcus pentosaceus (strain ATCC 25745 / CCUG 21536 / LMG 10740 / 183-1w), this protein is Ribosome-recycling factor.